Here is a 137-residue protein sequence, read N- to C-terminus: Large ribosomal subunit protein uL16c (137 aa).

This sequence belongs to the universal ribosomal protein uL16 family. As to quaternary structure, part of the 50S ribosomal subunit.

The protein localises to the plastid. It is found in the chloroplast. The polypeptide is Large ribosomal subunit protein uL16c (Bigelowiella natans (Pedinomonas minutissima)).